Consider the following 149-residue polypeptide: Large ribosomal subunit protein uL13 (149 aa).

This sequence belongs to the universal ribosomal protein uL13 family. Part of the 50S ribosomal subunit.

In terms of biological role, this protein is one of the early assembly proteins of the 50S ribosomal subunit, although it is not seen to bind rRNA by itself. It is important during the early stages of 50S assembly. This is Large ribosomal subunit protein uL13 from Borrelia turicatae (strain 91E135).